The sequence spans 398 residues: Transcription factor kk1f (398 aa).

Residues 1 to 28 are disordered; the sequence is MTFVETVAVPDNEERPSAGHNRPVADST. In terms of domain architecture, bZIP spans 31–62; the sequence is PNAREMKVQNRVAQRTHHRRLKTKLEVLRERL. Residues 34 to 50 are basic motif; sequence REMKVQNRVAQRTHHRR. The leucine-zipper stretch occupies residues 51 to 58; sequence LKTKLEVL.

This sequence belongs to the bZIP family.

The protein localises to the nucleus. It participates in secondary metabolite biosynthesis. Functionally, transcription factor; part of the gene cluster that mediates the biosynthesis of KK-1, a novel cyclic depsipeptide with 10 residues which is a promising active compound with high activity against many plant pathogens, especially Botrytis cinerea. Positively regulates the expression of all the genes from the KK-1 biosynthesis gene cluster. The sequence is that of Transcription factor kk1f from Curvularia clavata.